Consider the following 152-residue polypeptide: Lipoprotein signal peptidase (152 aa).

2 consecutive transmembrane segments (helical) span residues 55–75 and 87–107; these read NGRW…LYYL and VALG…IATG. Catalysis depends on residues D111 and D129. The helical transmembrane segment at 125–145 threads the bilayer; that stretch reads FNVADICVTVGVGLLFLHLVL.

It belongs to the peptidase A8 family.

The protein localises to the cell membrane. It carries out the reaction Release of signal peptides from bacterial membrane prolipoproteins. Hydrolyzes -Xaa-Yaa-Zaa-|-(S,diacylglyceryl)Cys-, in which Xaa is hydrophobic (preferably Leu), and Yaa (Ala or Ser) and Zaa (Gly or Ala) have small, neutral side chains.. Its pathway is protein modification; lipoprotein biosynthesis (signal peptide cleavage). Functionally, this protein specifically catalyzes the removal of signal peptides from prolipoproteins. In Symbiobacterium thermophilum (strain DSM 24528 / JCM 14929 / IAM 14863 / T), this protein is Lipoprotein signal peptidase.